Here is a 630-residue protein sequence, read N- to C-terminus: MDFPSRFEVIVIGGGHAGTEAALASARMGVKTLLLTHNVETLGHMSCNPAIGGIGKSHLVKEIDALGGAMALATDKSGIQFRVLNNRKGPAVRATRAQADRAIYKAVVREILENQPNLWIFQQSCDDLIVEQDQVKGVVTQMGLRFFAESVVLTTGTFLGGLIHIGLQNHSGGRAGDPPSIALAHRMRELPLRVGRLKTGTPPRIDGRSVDFSVMTEQPGDTPIPVMSFMGNAEMHPRQVSCWITHTNARTHEIIASNLDRSPMYSGVIEGVGPRYCPSIEDKIHRFADKDSHQVFIEPEGLTTHELYPNGISTSLPFDVQLELVRSIRGMENAHIVRPGYAIEYDYFDPRDLKYSLETKVIGGLFFAGQINGTTGYEEAGAQGLLAGTNAALRAQGRDSWCPRRDEAYIGVLVDDLITLGTQEPYRMFTSRAEYRLILREDNADLRLTEKGRELGLIDDQRWAAFCAKRDGIEREEQRLKSTWVRPNTEQGQAIVDKFGTPLSHEYSLLNLLARPEIDYAGLIEATGGEAIDPQVAEQVEIRTKYAGYIDRQQDEIARLRASEDTRLPVDIDYSTISGLSKEIQGKLGQTRPETLGQASRIPGVTPAAISLLLIHLKKRGAGRELEQSA.

Position 13–18 (13–18 (GGGHAG)) interacts with FAD. NAD(+) is bound at residue 273–287 (GPRYCPSIEDKIHRF).

It belongs to the MnmG family. In terms of assembly, homodimer. Heterotetramer of two MnmE and two MnmG subunits. Requires FAD as cofactor.

The protein resides in the cytoplasm. NAD-binding protein involved in the addition of a carboxymethylaminomethyl (cmnm) group at the wobble position (U34) of certain tRNAs, forming tRNA-cmnm(5)s(2)U34. The chain is tRNA uridine 5-carboxymethylaminomethyl modification enzyme MnmG from Pseudomonas putida (strain GB-1).